Consider the following 119-residue polypeptide: Large ribosomal subunit protein bL20 (119 aa).

The protein belongs to the bacterial ribosomal protein bL20 family.

Functionally, binds directly to 23S ribosomal RNA and is necessary for the in vitro assembly process of the 50S ribosomal subunit. It is not involved in the protein synthesizing functions of that subunit. The protein is Large ribosomal subunit protein bL20 of Acinetobacter baylyi (strain ATCC 33305 / BD413 / ADP1).